Reading from the N-terminus, the 605-residue chain is Inactive LRR receptor-like serine/threonine-protein kinase BIR2 (605 aa).

The N-terminal stretch at 1 to 28 is a signal peptide; that stretch reads MKEIGSKPRKLLPLCFIIFLCFCSSVMA. Residues 29-229 lie on the Extracellular side of the membrane; it reads ADEDDIRCLR…CGGLSKKNLG (201 aa). A glycan (N-linked (GlcNAc...) asparagine) is linked at asparagine 58. LRR repeat units follow at residues 101 to 125, 127 to 150, 152 to 173, and 174 to 197; these read CASLQKLDLSSNRLSGNIPTELCNW, PFLVSLDLSNNELNGEIPPDLAKC, FVNSLVLSDNRLSGQIPVQFSA, and LGRLGRFSVANNDLSGRIPVFFSS. The helical transmembrane segment at 230 to 250 threads the bilayer; that stretch reads IIIAAGVFGAAASMLLAFGIW. The Cytoplasmic segment spans residues 251–605; sequence WYYHLKWTRR…IFDTQENEKV (355 aa). The residue at position 271 (serine 271) is a Phosphoserine; by BAK1. Threonine 283 carries the phosphothreonine; by BAK1 modification. The residue at position 286 (serine 286) is a Phosphoserine; by BAK1. Threonine 304 carries the phosphothreonine; by BAK1 modification. Residues 307 to 578 form the Protein kinase domain; that stretch reads FNSENIIVST…FQAYQSLKAI (272 aa). ATP is bound at residue 313 to 321; sequence IVSTRTGTT. Serine 330 bears the Phosphoserine; by BAK1 mark. Position 335 (lysine 335) interacts with ATP. A Phosphoserine; by BAK1 modification is found at serine 389. Threonine 402 is modified (phosphothreonine). Phosphoserine; by BAK1 is present on residues serine 448 and serine 462. Phosphothreonine; by BAK1 is present on threonine 466. A Phosphotyrosine modification is found at tyrosine 479. At threonine 482 the chain carries Phosphothreonine. Residue serine 486 is modified to Phosphoserine. Residue threonine 533 is modified to Phosphothreonine; by BAK1.

The protein belongs to the protein kinase superfamily. Ser/Thr protein kinase family. As to quaternary structure, interacts constitutively with BAK1, when phosphorylated, thereby preventing interaction with the ligand-binding LRR-RLK FLS2. Upon infection, pathogen-associated molecular patterns (PAMP) perception leads to BIR2 release from the BAK1 complex and enables the recruitment of BAK1 into the FLS2 complex. Post-translationally, phosphorylated by BAK1, this interacts promotes interaction with BAK1.

The protein localises to the cell membrane. Its function is as follows. Pseudokinases lacking protein kinase activity and unable to bind ATP-analogs. Negative regulator of pathogen-associated molecular patterns- (PAMP-) triggered immunity by limiting BAK1-receptor complex formation in the absence of ligands. The sequence is that of Inactive LRR receptor-like serine/threonine-protein kinase BIR2 from Arabidopsis thaliana (Mouse-ear cress).